Here is a 529-residue protein sequence, read N- to C-terminus: Chromosomal replication initiator protein DnaA (529 aa).

The domain I, interacts with DnaA modulators stretch occupies residues 1 to 72 (MQDFWHAASA…SLACDYWEAT (72 aa)). The interval 72 to 192 (TVDVQFVLDP…HVDDSVHERS (121 aa)) is domain II. The tract at residues 193-409 (RLNQILTFDN…GALRKILAYS (217 aa)) is domain III, AAA+ region. ATP contacts are provided by G237, G239, K240, and T241. A domain IV, binds dsDNA region spans residues 410–529 (NFHGKEITIE…LHVLEQTLKG (120 aa)).

The protein belongs to the DnaA family. As to quaternary structure, oligomerizes as a right-handed, spiral filament on DNA at oriC.

The protein localises to the cytoplasm. Plays an essential role in the initiation and regulation of chromosomal replication. ATP-DnaA binds to the origin of replication (oriC) to initiate formation of the DNA replication initiation complex once per cell cycle. Binds the DnaA box (a 9 base pair repeat at the origin) and separates the double-stranded (ds)DNA. Forms a right-handed helical filament on oriC DNA; dsDNA binds to the exterior of the filament while single-stranded (ss)DNA is stabiized in the filament's interior. The ATP-DnaA-oriC complex binds and stabilizes one strand of the AT-rich DNA unwinding element (DUE), permitting loading of DNA polymerase. After initiation quickly degrades to an ADP-DnaA complex that is not apt for DNA replication. Binds acidic phospholipids. This chain is Chromosomal replication initiator protein DnaA, found in Ralstonia pickettii (strain 12J).